The following is a 581-amino-acid chain: Frizzled-10 (581 aa).

The N-terminal stretch at 1–20 is a signal peptide; it reads MQRPGPRLWLVLQVMGSCAA. Over 21-225 the chain is Extracellular; that stretch reads ISSMDMERPG…DVYWSREDKR (205 aa). The 122-residue stretch at 29-150 folds into the FZ domain; that stretch reads PGDGKCQPIE…NDPNYLCMEA (122 aa). Cystine bridges form between cysteine 34-cysteine 95, cysteine 42-cysteine 88, cysteine 79-cysteine 117, cysteine 106-cysteine 147, and cysteine 110-cysteine 134. A glycan (N-linked (GlcNAc...) asparagine) is linked at asparagine 48. An N-linked (GlcNAc...) asparagine glycan is attached at asparagine 153. Residues 226–246 form a helical membrane-spanning segment; that stretch reads FAVVWLAIWAVLCFFSSAFTV. Over 247-262 the chain is Cytoplasmic; it reads LTFLIDPARFRYPERP. A helical transmembrane segment spans residues 263 to 283; sequence IIFLSMCYCVYSVGYLIRLFA. Over 284–311 the chain is Extracellular; that stretch reads GAESIACDRDSGQLYVIQEGLESTGCTL. The helical transmembrane segment at 312-332 threads the bilayer; sequence VFLVLYYFGMASSLWWVVLTL. Topologically, residues 333–351 are cytoplasmic; it reads TWFLAAGKKWGHEAIEANS. The helical transmembrane segment at 352-372 threads the bilayer; that stretch reads SYFHLAAWAIPAVKTILILVM. Over 373 to 393 the chain is Extracellular; the sequence is RRVAGDELTGVCYVGSMDVNA. The chain crosses the membrane as a helical span at residues 394–414; it reads LTGFVLIPLACYLVIGTSFIL. The Cytoplasmic portion of the chain corresponds to 415-443; it reads SGFVALFHIRRVMKTGGENTDKLEKLMVR. The helical transmembrane segment at 444–464 threads the bilayer; that stretch reads IGLFSVLYTVPATCVIACYFY. At 465-502 the chain is on the extracellular side; that stretch reads ERLNMDYWKILAAQHKCKMNNQTKTLDCLMAASIPAVE. Asparagine 485 carries N-linked (GlcNAc...) asparagine glycosylation. A helical membrane pass occupies residues 503–523; sequence IFMVKIFMLLVVGITSGMWIW. The Cytoplasmic segment spans residues 524 to 581; that stretch reads TSKTLQSWQQVCSRRLKKKSRRKPASVITSGGIYKKAQHPQKTHHGKYEIPAQSPTCV. A Lys-Thr-X-X-X-Trp motif, mediates interaction with the PDZ domain of Dvl family members motif is present at residues 526 to 531; that stretch reads KTLQSW. Positions 560–581 are disordered; that stretch reads AQHPQKTHHGKYEIPAQSPTCV. The short motif at 579–581 is the PDZ-binding element; it reads TCV.

The protein belongs to the G-protein coupled receptor Fz/Smo family. In terms of assembly, interacts with WNT7B. Interacts with MYOC. Ubiquitinated by ZNRF3, leading to its degradation by the proteasome. Highest levels in the placenta and fetal kidney, followed by fetal lung and brain. In adult brain, abundantly expressed in the cerebellum, followed by cerebral cortex, medulla and spinal cord; very low levels in total brain, frontal lobe, temporal lobe and putamen. Weak expression detected in adult brain, heart, lung, skeletal muscle, pancreas, spleen and prostate.

It is found in the cell membrane. In terms of biological role, receptor for Wnt proteins. Functions in the canonical Wnt/beta-catenin signaling pathway. The canonical Wnt/beta-catenin signaling pathway leads to the activation of disheveled proteins, inhibition of GSK-3 kinase, nuclear accumulation of beta-catenin and activation of Wnt target genes. A second signaling pathway involving PKC and calcium fluxes has been seen for some family members, but it is not yet clear if it represents a distinct pathway or if it can be integrated in the canonical pathway, as PKC seems to be required for Wnt-mediated inactivation of GSK-3 kinase. Both pathways seem to involve interactions with G-proteins. May be involved in transduction and intercellular transmission of polarity information during tissue morphogenesis and/or in differentiated tissues. The polypeptide is Frizzled-10 (FZD10) (Homo sapiens (Human)).